Consider the following 144-residue polypeptide: Large ribosomal subunit protein uL15 (144 aa).

Residues 1–57 (MFLNTLRPGEGSKHAPKRVGRGIGSGLGKTGGRGHKGLKSRSGGSVKPGFEGGQMPL) form a disordered region. Residues 21 to 31 (RGIGSGLGKTG) show a composition bias toward gly residues.

The protein belongs to the universal ribosomal protein uL15 family. In terms of assembly, part of the 50S ribosomal subunit.

Its function is as follows. Binds to the 23S rRNA. The polypeptide is Large ribosomal subunit protein uL15 (Marinomonas sp. (strain MWYL1)).